A 318-amino-acid chain; its full sequence is Methionyl-tRNA formyltransferase (318 aa).

112 to 115 (SILP) contacts (6S)-5,6,7,8-tetrahydrofolate.

Belongs to the Fmt family.

The catalysed reaction is L-methionyl-tRNA(fMet) + (6R)-10-formyltetrahydrofolate = N-formyl-L-methionyl-tRNA(fMet) + (6S)-5,6,7,8-tetrahydrofolate + H(+). Attaches a formyl group to the free amino group of methionyl-tRNA(fMet). The formyl group appears to play a dual role in the initiator identity of N-formylmethionyl-tRNA by promoting its recognition by IF2 and preventing the misappropriation of this tRNA by the elongation apparatus. The polypeptide is Methionyl-tRNA formyltransferase (Shewanella frigidimarina (strain NCIMB 400)).